A 276-amino-acid chain; its full sequence is Halorhodopsin (276 aa).

The propeptide occupies 1-21 (MTAVSTTATTVLQATQSDVLQ). Over 22–25 (EIQS) the chain is Extracellular. The chain crosses the membrane as a helical span at residues 26-51 (NFLLNSSIWVNIALAGVVILLFVAMG). The Cytoplasmic portion of the chain corresponds to 52–57 (RDLESP). A helical transmembrane segment spans residues 58–81 (RAKLIWVATMLVPLVSISSYAGLA). Residues 82–105 (SGLTVGFLQMPPGHALAGQEVLSP) lie on the Extracellular side of the membrane. The helical transmembrane segment at 106 to 127 (WGRYLTWTFSTPMILLALGLLA) threads the bilayer. At 128–130 (DTD) the chain is on the cytoplasmic side. The helical transmembrane segment at 131 to 154 (IASLFTAITMDIGMCVTGLAAALI) threads the bilayer. The Extracellular portion of the chain corresponds to 155–157 (TSS). The helical transmembrane segment at 158 to 180 (HLLRWVFYGISCAFFVAVLYVLL) threads the bilayer. The Cytoplasmic portion of the chain corresponds to 181–192 (VQWPADAEAAGT). Residues 193–216 (SEIFGTLKILTVVLWLGYPILWAL) form a helical membrane-spanning segment. The Extracellular portion of the chain corresponds to 217–225 (GSEGVALLS). Residues 226–254 (VGVTSWGYSGLDILAKYVFAFLLLRWVAA) traverse the membrane as a helical segment. K241 is modified (N6-(retinylidene)lysine). The Cytoplasmic segment spans residues 255–276 (NEGTVSGSGMGIGSGGAAPADD).

Belongs to the archaeal/bacterial/fungal opsin family.

The protein resides in the cell membrane. In terms of biological role, light-driven anion pump. This chain is Halorhodopsin, found in Halobacterium halobium (strain shark).